A 476-amino-acid chain; its full sequence is ATP synthase subunit beta (476 aa).

154 to 161 (GGAGVGKT) provides a ligand contact to ATP.

Belongs to the ATPase alpha/beta chains family. F-type ATPases have 2 components, CF(1) - the catalytic core - and CF(0) - the membrane proton channel. CF(1) has five subunits: alpha(3), beta(3), gamma(1), delta(1), epsilon(1). CF(0) has four main subunits: a(1), b(1), b'(1) and c(9-12).

It is found in the cell inner membrane. It carries out the reaction ATP + H2O + 4 H(+)(in) = ADP + phosphate + 5 H(+)(out). Functionally, produces ATP from ADP in the presence of a proton gradient across the membrane. The catalytic sites are hosted primarily by the beta subunits. The protein is ATP synthase subunit beta of Rhodopseudomonas palustris (strain ATCC BAA-98 / CGA009).